The primary structure comprises 547 residues: DNA mismatch repair protein MutL (547 aa).

The protein belongs to the DNA mismatch repair MutL/HexB family.

Functionally, this protein is involved in the repair of mismatches in DNA. It is required for dam-dependent methyl-directed DNA mismatch repair. May act as a 'molecular matchmaker', a protein that promotes the formation of a stable complex between two or more DNA-binding proteins in an ATP-dependent manner without itself being part of a final effector complex. This is DNA mismatch repair protein MutL from Deinococcus radiodurans (strain ATCC 13939 / DSM 20539 / JCM 16871 / CCUG 27074 / LMG 4051 / NBRC 15346 / NCIMB 9279 / VKM B-1422 / R1).